The sequence spans 230 residues: Fibrillarin-like rRNA/tRNA 2'-O-methyltransferase (230 aa).

S-adenosyl-L-methionine is bound by residues 87 to 88 (TT), 105 to 106 (EF), 130 to 131 (DA), and 150 to 153 (DVAQ).

The protein belongs to the methyltransferase superfamily. Fibrillarin family. In terms of assembly, interacts with nop5. Component of box C/D small ribonucleoprotein (sRNP) particles that contain rpl7ae, FlpA and nop5, plus a guide RNA.

Functionally, involved in pre-rRNA and tRNA processing. Utilizes the methyl donor S-adenosyl-L-methionine to catalyze the site-specific 2'-hydroxyl methylation of ribose moieties in rRNA and tRNA. Site specificity is provided by a guide RNA that base pairs with the substrate. Methylation occurs at a characteristic distance from the sequence involved in base pairing with the guide RNA. The sequence is that of Fibrillarin-like rRNA/tRNA 2'-O-methyltransferase from Methanococcus maripaludis (strain C5 / ATCC BAA-1333).